Here is a 264-residue protein sequence, read N- to C-terminus: 3-deoxy-manno-octulosonate cytidylyltransferase (264 aa).

It belongs to the KdsB family.

It localises to the cytoplasm. It catalyses the reaction 3-deoxy-alpha-D-manno-oct-2-ulosonate + CTP = CMP-3-deoxy-beta-D-manno-octulosonate + diphosphate. The protein operates within nucleotide-sugar biosynthesis; CMP-3-deoxy-D-manno-octulosonate biosynthesis; CMP-3-deoxy-D-manno-octulosonate from 3-deoxy-D-manno-octulosonate and CTP: step 1/1. Its pathway is bacterial outer membrane biogenesis; lipopolysaccharide biosynthesis. Activates KDO (a required 8-carbon sugar) for incorporation into bacterial lipopolysaccharide in Gram-negative bacteria. In Methylibium petroleiphilum (strain ATCC BAA-1232 / LMG 22953 / PM1), this protein is 3-deoxy-manno-octulosonate cytidylyltransferase.